Consider the following 1644-residue polypeptide: Terminal uridylyltransferase 4 (1644 aa).

Disordered regions lie at residues 30–60 (SNQTLKPRNDKSEIGTSSLNRNSSKKTKQND) and 75–277 (AASV…EMDY). Ser102 carries the phosphoserine modification. The segment covering 108–123 (KGSSQTKLEKTPSLQT) has biased composition (polar residues). Residue Ser131 is modified to Phosphoserine. Composition is skewed to polar residues over residues 146 to 156 (AEATTEKALNS) and 163 to 174 (TPTSQMKLQKTP). A Phosphoserine modification is found at Ser176. Polar residues-rich tracts occupy residues 194–209 (QTESQQTGKKLTSSFV) and 226–242 (LENSSLSQKQQTQTDNI). Basic and acidic residues predominate over residues 258–272 (DLSKMKSEESNKENS). A required for interaction with LIN28A and pre-let-7 RNA region spans residues 273–353 (SEMDYLENAT…KEKRHKKNIL (81 aa)). Cys326, Cys329, His342, and His348 together coordinate Zn(2+). Basic and acidic residues predominate over residues 603–623 (IADENKAKADEPKDDTKKTET). Positions 603 to 640 (IADENKAKADEPKDDTKKTETDNQSNAAKAKHGKSPLT) are disordered. The 50-residue stretch at 649 to 698 (LGQLWLELLKFYTLDFALEEYVICVRIQDILTRENKNWPKRRIAIEDPFS) folds into the PAP-associated 1 domain. Disordered regions lie at residues 733–759 (KGGNKSTMDPKKKEKGKLSSKKPVKSD) and 812–841 (HGQDSSSLSTASGGSDLKQKSAEKQGDLTP). The span at 745 to 755 (KEKGKLSSKKP) shows a compositional bias: basic residues. The segment covering 815-827 (DSSSLSTASGGSD) has biased composition (low complexity). The span at 828-837 (LKQKSAEKQG) shows a compositional bias: basic and acidic residues. The segment at 918–1634 (DKFILTSGKP…CATRRCRERC (717 aa)) is sufficient for monouridylation activity. The CCHC-type 1 zinc-finger motif lies at 930–947 (IVCSICKKDGHSKNDCPE). Residues 1015–1018 (SSKN), 1025–1028 (SDLD), Asn1098, Lys1120, 1138–1142 (SYAYI), and His1254 contribute to the UTP site. 2 residues coordinate Mg(2+): Asp1026 and Asp1028. A PAP-associated 2 domain is found at 1201–1254 (SLGELWLGLLRFYTEEFDFKEYVISIRQKKLLTTFEKQWTSKCIAIEDPFDLNH). Residues 1310–1327 (RCCRVCGKIGHYMKDCPK) form a CCHC-type 2 zinc finger. Residues 1329 to 1350 (KRLKKKDSEEEKEGNEEEKDSR) are disordered. Residues 1358–1375 (LRCFICGDAGHVRRECPE) form a CCHC-type 3 zinc finger. The segment covering 1402 to 1427 (AGSAQQQSDQSIRTRQSSECSDSPSY) has biased composition (low complexity). Residues 1402 to 1483 (AGSAQQQSDQ…LYNFPQSPPA (82 aa)) form a disordered region. Residues 1428–1450 (SPQPQPFPQNSPQPSALPPPPSQ) are compositionally biased toward pro residues. The span at 1451–1473 (PGSQPKLGPPQQGGQPPHQVQMP) shows a compositional bias: low complexity. An Omega-N-methylarginine modification is found at Arg1624.

This sequence belongs to the DNA polymerase type-B-like family. Interacts with LIN28A in the presence of pre-let-7 RNA. Interacts with T2BP. Interacts with MOV10; the interaction is RNA-dependent. Mg(2+) is required as a cofactor. Requires Mn(2+) as cofactor. As to expression, ubiquitously expressed.

The protein localises to the nucleus. The protein resides in the cytoplasm. Its subcellular location is the cytoplasmic ribonucleoprotein granule. It carries out the reaction RNA(n) + UTP = RNA(n)-3'-uridine ribonucleotide + diphosphate. Uridylyltransferase that mediates the terminal uridylation of mRNAs with short (less than 25 nucleotides) poly(A) tails, hence facilitating global mRNA decay. Essential for both oocyte maturation and fertility. Through 3' terminal uridylation of mRNA, sculpts, with TUT7, the maternal transcriptome by eliminating transcripts during oocyte growth. Involved in microRNA (miRNA)-induced gene silencing through uridylation of deadenylated miRNA targets. Also functions as an integral regulator of microRNA biogenesiS using 3 different uridylation mechanisms. Acts as a suppressor of miRNA biogenesis by mediating the terminal uridylation of some miRNA precursors, including that of let-7 (pre-let-7), miR107, miR-143 and miR-200c. Uridylated miRNAs are not processed by Dicer and undergo degradation. Degradation of pre-let-7 contributes to the maintenance of embryonic stem (ES) cell pluripotency. Also catalyzes the 3' uridylation of miR-26A, a miRNA that targets IL6 transcript. This abrogates the silencing of IL6 transcript, hence promoting cytokine expression. In the absence of LIN28A, TUT7 and TUT4 monouridylate group II pre-miRNAs, which includes most of pre-let7 members, that shapes an optimal 3' end overhang for efficient processing. Add oligo-U tails to truncated pre-miRNAS with a 5' overhang which may promote rapid degradation of non-functional pre-miRNA species. May also suppress Toll-like receptor-induced NF-kappa-B activation via binding to T2BP. Does not play a role in replication-dependent histone mRNA degradation. Due to functional redundancy between TUT4 and TUT7, the identification of the specific role of each of these proteins is difficult. TUT4 and TUT7 restrict retrotransposition of long interspersed element-1 (LINE-1) in cooperation with MOV10 counteracting the RNA chaperonne activity of L1RE1. TUT7 uridylates LINE-1 mRNAs in the cytoplasm which inhibits initiation of reverse transcription once in the nucleus, whereas uridylation by TUT4 destabilizes mRNAs in cytoplasmic ribonucleoprotein granules. This is Terminal uridylyltransferase 4 from Mus musculus (Mouse).